The chain runs to 590 residues: L-erythrulose kinase (590 aa).

The DhaK domain maps to 7–331 (QPSSFARELT…WRAPADAPAF (325 aa)). The active-site Tele-hemiaminal-histidine intermediate is His-217. The 203-residue stretch at 366-568 (HCVAAALNAA…LAMILDAVSA (203 aa)) folds into the DhaL domain. ADP-binding positions include 398-401 (HGIG), 441-442 (TS), Gly-483, Arg-540, and 553-555 (DAG).

It carries out the reaction L-erythrulose + ATP = L-erythrulose 1-phosphate + ADP + H(+). It participates in carbohydrate metabolism. Functionally, involved in catabolism of D-apiose. Catalyzes the phosphorylation of L-erythrulose to L-erythrulose 1-phosphate. Can also phosphorylate D-erythrulose and dihydroxyacetone in vitro. The chain is L-erythrulose kinase from Pectobacterium atrosepticum (strain SCRI 1043 / ATCC BAA-672) (Erwinia carotovora subsp. atroseptica).